A 165-amino-acid chain; its full sequence is Putative BTB/POZ domain-containing protein At2g40440 (165 aa).

A BTB domain is found at 24–98 (VDVRLKAGDS…IYSDGSMLSA (75 aa)).

The protein operates within protein modification; protein ubiquitination. Functionally, may act as a substrate-specific adapter of an E3 ubiquitin-protein ligase complex (CUL3-RBX1-BTB) which mediates the ubiquitination and subsequent proteasomal degradation of target proteins. The sequence is that of Putative BTB/POZ domain-containing protein At2g40440 from Arabidopsis thaliana (Mouse-ear cress).